We begin with the raw amino-acid sequence, 246 residues long: Probable phosphatase PBPRB2022 (246 aa).

Residues H8, H10, H16, H41, E74, H102, H132, D193, and H195 each contribute to the Zn(2+) site.

The protein belongs to the PHP family. It depends on Zn(2+) as a cofactor.

In Photobacterium profundum (strain SS9), this protein is Probable phosphatase PBPRB2022.